The chain runs to 783 residues: Mitochondrial intermediate peptidase (783 aa).

The N-terminal 33 residues, 1–33 (MKAGIPLSRCTQRIPLLVARQVSRNITTTTTKF), are a transit peptide targeting the mitochondrion. Residue His-565 coordinates Zn(2+). Glu-566 is a catalytic residue. The Zn(2+) site is built by His-569 and His-572.

This sequence belongs to the peptidase M3 family. It depends on Zn(2+) as a cofactor.

Its subcellular location is the mitochondrion matrix. It catalyses the reaction Release of an N-terminal octapeptide as second stage of processing of some proteins imported into the mitochondrion.. Its function is as follows. Cleaves proteins, imported into the mitochondrion, to their mature size. While most mitochondrial precursor proteins are processed to the mature form in one step by mitochondrial processing peptidase (MPP), the sequential cleavage by MIP of an octapeptide after initial processing by MPP is a required step for a subgroup of nuclear-encoded precursor proteins destined for the matrix or the inner membrane. The polypeptide is Mitochondrial intermediate peptidase (OCT1) (Candida albicans (strain SC5314 / ATCC MYA-2876) (Yeast)).